The sequence spans 438 residues: tRNA(Ile)-lysidine synthase (438 aa).

An ATP-binding site is contributed by 26–31; it reads SGGADS.

Belongs to the tRNA(Ile)-lysidine synthase family.

It localises to the cytoplasm. The enzyme catalyses cytidine(34) in tRNA(Ile2) + L-lysine + ATP = lysidine(34) in tRNA(Ile2) + AMP + diphosphate + H(+). Its function is as follows. Ligates lysine onto the cytidine present at position 34 of the AUA codon-specific tRNA(Ile) that contains the anticodon CAU, in an ATP-dependent manner. Cytidine is converted to lysidine, thus changing the amino acid specificity of the tRNA from methionine to isoleucine. This chain is tRNA(Ile)-lysidine synthase, found in Parabacteroides distasonis (strain ATCC 8503 / DSM 20701 / CIP 104284 / JCM 5825 / NCTC 11152).